Consider the following 218-residue polypeptide: Small ribosomal subunit protein uS3c (218 aa).

The KH type-2 domain occupies 47–118 (VQKNMRISSG…RLNIAITRVA (72 aa)).

This sequence belongs to the universal ribosomal protein uS3 family. Part of the 30S ribosomal subunit.

It is found in the plastid. The protein resides in the chloroplast. The protein is Small ribosomal subunit protein uS3c (rps3) of Calycanthus floridus var. glaucus (Eastern sweetshrub).